The primary structure comprises 21 residues: Thanatin (21 aa).

Cysteine 11 and cysteine 18 form a disulfide bridge.

It is found in the secreted. In terms of biological role, insect defense peptide with a broad spectrum of activity against Gram-positive and Gram-negative bacteria and fungi. No activity against S.aureus. Stops respiration in bacteria but does not permeabilize their inner membranes. In Podisus maculiventris (Spined soldier bug), this protein is Thanatin.